The following is a 526-amino-acid chain: Efflux pump aunC (526 aa).

Helical transmembrane passes span 23 to 43, 64 to 84, 89 to 109, 125 to 145, 155 to 175, 183 to 203, 218 to 238, 254 to 274, 296 to 316, 339 to 359, 360 to 380, 386 to 406, 418 to 438, and 491 to 511; these read LCYKLVLVTVGLCFCIFCTSL, DVGWYASAYLLTTCAVTLPFG, FFPIKWVYLSALFVFELGSFI, VAGLGGGGLFSGSLLIITQCV, GFIMSIFAVASVIAPLMGGAF, WCFYINLPFGLVSAVVIFFTF, AAGLDPLGTATFLPAIVCLLL, IIALFTLFGVLLACFVGLQLW, LYGFCLNGAMFTFVYYLPIWF, VIFAIISGVLVSATGYFGPFM, LLSAAMASIAAGLLSMLHPSS, IGYQVLLGSSIGMGFQLPVFV, TATALMTFIQLLGGAIFVSVA, and VHTFYLAIGLAAASFLAATVI.

Belongs to the major facilitator superfamily. TCR/Tet family.

The protein resides in the cell membrane. In terms of biological role, efflux pump; part of the gene cluster that mediates the biosynthesis of aurasperone B, a dimeric gamma-naphthopyrone. The sequence is that of Efflux pump aunC from Aspergillus niger (strain ATCC 1015 / CBS 113.46 / FGSC A1144 / LSHB Ac4 / NCTC 3858a / NRRL 328 / USDA 3528.7).